We begin with the raw amino-acid sequence, 72 residues long: Translation initiation factor IF-1 (72 aa).

The S1-like domain occupies 1 to 72 (MAKEEVLEFP…TKGRITYRFK (72 aa)).

Belongs to the IF-1 family. Component of the 30S ribosomal translation pre-initiation complex which assembles on the 30S ribosome in the order IF-2 and IF-3, IF-1 and N-formylmethionyl-tRNA(fMet); mRNA recruitment can occur at any time during PIC assembly.

Its subcellular location is the cytoplasm. Functionally, one of the essential components for the initiation of protein synthesis. Stabilizes the binding of IF-2 and IF-3 on the 30S subunit to which N-formylmethionyl-tRNA(fMet) subsequently binds. Helps modulate mRNA selection, yielding the 30S pre-initiation complex (PIC). Upon addition of the 50S ribosomal subunit IF-1, IF-2 and IF-3 are released leaving the mature 70S translation initiation complex. The sequence is that of Translation initiation factor IF-1 from Brucella abortus (strain 2308).